The chain runs to 398 residues: Cell adhesion molecule 3 (398 aa).

The first 24 residues, M1–A24, serve as a signal peptide directing secretion. Positions N25–V126 constitute an Ig-like V-type domain. Topologically, residues N25 to H330 are extracellular. Disulfide bonds link C50-C110, C152-C209, and C254-C299. Ig-like C2-type domains follow at residues P130–E228 and P233–N315. An N-linked (GlcNAc...) asparagine glycan is attached at N290. Residues A331–L351 form a helical membrane-spanning segment. At G352–I398 the chain is on the cytoplasmic side. The segment at A367 to I398 is disordered. S388 bears the Phosphoserine mark.

Belongs to the nectin family. Homodimer. Can form trans-heterodimers with NECTIN3. Interacts with EPB41L1, DLG3, PALS2 and CASK. Isoform 1 is expressed mainly in adult and fetal brain. Isoform 2 is highly expressed in adult brain and weakly expressed in placenta. In brain, Isoform 2 is highly expressed in cerebellum.

Its subcellular location is the cell membrane. It localises to the cell junction. In terms of biological role, involved in cell-cell adhesion. Has both calcium-independent homophilic cell-cell adhesion activity and calcium-independent heterophilic cell-cell adhesion activity with IGSF4, NECTIN1 and NECTIN3. Interaction with EPB41L1 may regulate structure or function of cell-cell junctions. The polypeptide is Cell adhesion molecule 3 (CADM3) (Homo sapiens (Human)).